Consider the following 829-residue polypeptide: MLMSFNHPYQPYEIQLQLMQCIYGALSSGKKIAILESPTGTGKTLSLLCSSITWLRDNKLHLLSQNLNNGGIAINSSIELSDDDDFSDDEPNWVNESYNSSILDNKLLALNDYEKHLDTIANKHYKIDKNLIGNDNNNNKVKRRKIEHIPVGFEEDEFLPQDYISDSEELEQTKSEALSNEVKALLAKLDSKSNDEQTTSTELLQELNPVKIFFASRTHSQLKQFASQLKLPKFKSSFDEKFVSNERLKYLPLGSRKQLCINKSITSKWKSTEAINDACKELLQSEKGCPYHNKNTSNTLFRDHVFTGVHDIEDILALGESLNVCPYYATRDSITSAEIITLPYQYLLSESTRDSLNIDLSNSIVIVDEAHNLIDTINTIHSSHISLQELKTCQIGLQMYFAKFKSRLNAGNRVNLLKLIKLLDILIEYINKNFKKSGQEISANEIFNNTNADTLNIHKLNQFIKVSKIAYKIDTYLNSLSKESDNENNEESKNKSTPLLFKVASFLSSLTNPNEEGKFFFEKNKSIKYMLLEPSQSFKSILDEARCVILAGGTMEPISDFFDNLFPDIIKDKSVTFACDHVIPDDNLNTYIIEEPKFEFTFDKRQNPELVNKHLFQFFIKLSVNVPPTGGIVAFFPSYSYLQFVIDNWRSNGLFDKLNKIREIFYESKNGSDPLDEYIKVIEARNPAILFAVVGGKLSEGINFQDDLCRAVVMTGLPYPNVMSGELLIKKNHIETKILKNGGSKADVSCATKDFFDTICMKAVNQSVGRAIRHIDDYSNIYLLDQRYSNSKIKDKLSQWVRKRIQPETNLELIMEKSNRTFQTKKTSN.

The 433-residue stretch at 1–433 (MLMSFNHPYQ…DILIEYINKN (433 aa)) folds into the Helicase ATP-binding domain. Residue 37–44 (SPTGTGKT) participates in ATP binding. Positions 260, 279, 289, and 325 each coordinate [4Fe-4S] cluster. A DEAH box motif is present at residues 368 to 371 (DEAH).

This sequence belongs to the DEAD box helicase family. DEAH subfamily. DDX11/CHL1 sub-subfamily. The cofactor is [4Fe-4S] cluster.

It is found in the nucleus. The catalysed reaction is Couples ATP hydrolysis with the unwinding of duplex DNA at the replication fork by translocating in the 5'-3' direction. This creates two antiparallel DNA single strands (ssDNA). The leading ssDNA polymer is the template for DNA polymerase III holoenzyme which synthesizes a continuous strand.. It catalyses the reaction ATP + H2O = ADP + phosphate + H(+). In terms of biological role, ATP-dependent DNA helicase important for chromosome transmission and normal cell cycle progression in G(2)/M. May have a role in changing DNA topology to allow the loading of proteins involved in maintaining sister chromatid cohesion in the vicinity of the centromeres. Has a specific role in chromosome segregation during meiosis II. The protein is ATP-dependent DNA helicase CHL1 (CHL1) of Vanderwaltozyma polyspora (strain ATCC 22028 / DSM 70294 / BCRC 21397 / CBS 2163 / NBRC 10782 / NRRL Y-8283 / UCD 57-17) (Kluyveromyces polysporus).